The sequence spans 66 residues: Alpha-like toxin BmK-M7 (66 aa).

Residues 2–64 form the LCN-type CS-alpha/beta domain; sequence RDGYIALPHN…VPIRVPGRCH (63 aa). 4 cysteine pairs are disulfide-bonded: Cys-12–Cys-63, Cys-16–Cys-36, Cys-22–Cys-46, and Cys-26–Cys-48.

It belongs to the long (4 C-C) scorpion toxin superfamily. Sodium channel inhibitor family. Alpha subfamily. Expressed by the venom gland.

It localises to the secreted. In terms of biological role, alpha toxins bind voltage-independently at site-3 of sodium channels (Nav) and inhibit the inactivation of the activated channels, thereby blocking neuronal transmission. This toxin is active on both mammals and insects. It can be considered as a cardiotoxin, as it can bind to human cardiac sodium channel and modify its normal properties. In Olivierus martensii (Manchurian scorpion), this protein is Alpha-like toxin BmK-M7.